The sequence spans 454 residues: Tubulin alpha chain (454 aa).

GTP is bound by residues Gln-12, Asp-72, Ser-141, Gly-145, Thr-146, Thr-180, Asn-207, and Asn-229. Asp-72 serves as a coordination point for Mg(2+). The active site involves Glu-255.

Belongs to the tubulin family. Dimer of alpha and beta chains. A typical microtubule is a hollow water-filled tube with an outer diameter of 25 nm and an inner diameter of 15 nM. Alpha-beta heterodimers associate head-to-tail to form protofilaments running lengthwise along the microtubule wall with the beta-tubulin subunit facing the microtubule plus end conferring a structural polarity. Microtubules usually have 13 protofilaments but different protofilament numbers can be found in some organisms and specialized cells. Requires Mg(2+) as cofactor.

Its subcellular location is the cytoplasm. The protein localises to the cytoskeleton. It catalyses the reaction GTP + H2O = GDP + phosphate + H(+). Its function is as follows. Tubulin is the major constituent of microtubules, a cylinder consisting of laterally associated linear protofilaments composed of alpha- and beta-tubulin heterodimers. Microtubules grow by the addition of GTP-tubulin dimers to the microtubule end, where a stabilizing cap forms. Below the cap, tubulin dimers are in GDP-bound state, owing to GTPase activity of alpha-tubulin. This is Tubulin alpha chain (TUB1) from Colletotrichum orbiculare (strain 104-T / ATCC 96160 / CBS 514.97 / LARS 414 / MAFF 240422) (Cucumber anthracnose fungus).